Consider the following 444-residue polypeptide: Deoxyguanosinetriphosphate triphosphohydrolase-like protein (444 aa).

Residues 1–26 are disordered; the sequence is MIASPWHERRLNEDKKRRNDHRSPFQ. In terms of domain architecture, HD spans 59–250; it reads RLTHSLEVSQ…MELADDIAYA (192 aa).

Belongs to the dGTPase family. Type 2 subfamily.

This Shewanella woodyi (strain ATCC 51908 / MS32) protein is Deoxyguanosinetriphosphate triphosphohydrolase-like protein.